Here is a 503-residue protein sequence, read N- to C-terminus: GMP synthase [glutamine-hydrolyzing] (503 aa).

A Glutamine amidotransferase type-1 domain is found at 1 to 189 (MVLVLDFGSQ…FLELAGVKRD (189 aa)). Cys78 acts as the Nucleophile in catalysis. Residues His164 and Glu166 contribute to the active site. The 189-residue stretch at 190 to 378 (WTPEHVLEEL…LGLPDTLRLR (189 aa)) folds into the GMPS ATP-PPase domain. 217 to 223 (SGGVDSS) lines the ATP pocket.

Homodimer.

The catalysed reaction is XMP + L-glutamine + ATP + H2O = GMP + L-glutamate + AMP + diphosphate + 2 H(+). The protein operates within purine metabolism; GMP biosynthesis; GMP from XMP (L-Gln route): step 1/1. In terms of biological role, catalyzes the synthesis of GMP from XMP. In Thermus thermophilus (strain ATCC 27634 / DSM 579 / HB8), this protein is GMP synthase [glutamine-hydrolyzing].